Here is a 333-residue protein sequence, read N- to C-terminus: Ketol-acid reductoisomerase (NADP(+)) (333 aa).

One can recognise a KARI N-terminal Rossmann domain in the interval 2 to 182 (AKIYYDEDAS…GATRAGVIET (181 aa)). NADP(+)-binding positions include 25–28 (YGSQ), serine 51, serine 53, and 83–86 (DTVQ). The active site involves histidine 108. Position 134 (glycine 134) interacts with NADP(+). A KARI C-terminal knotted domain is found at 183–327 (TFKEETETDL…EELRKMMPWL (145 aa)). Mg(2+) contacts are provided by aspartate 191, glutamate 195, glutamate 227, and glutamate 231. Residue serine 252 participates in substrate binding.

The protein belongs to the ketol-acid reductoisomerase family. Mg(2+) serves as cofactor.

It catalyses the reaction (2R)-2,3-dihydroxy-3-methylbutanoate + NADP(+) = (2S)-2-acetolactate + NADPH + H(+). The enzyme catalyses (2R,3R)-2,3-dihydroxy-3-methylpentanoate + NADP(+) = (S)-2-ethyl-2-hydroxy-3-oxobutanoate + NADPH + H(+). Its pathway is amino-acid biosynthesis; L-isoleucine biosynthesis; L-isoleucine from 2-oxobutanoate: step 2/4. It functions in the pathway amino-acid biosynthesis; L-valine biosynthesis; L-valine from pyruvate: step 2/4. Its function is as follows. Involved in the biosynthesis of branched-chain amino acids (BCAA). Catalyzes an alkyl-migration followed by a ketol-acid reduction of (S)-2-acetolactate (S2AL) to yield (R)-2,3-dihydroxy-isovalerate. In the isomerase reaction, S2AL is rearranged via a Mg-dependent methyl migration to produce 3-hydroxy-3-methyl-2-ketobutyrate (HMKB). In the reductase reaction, this 2-ketoacid undergoes a metal-dependent reduction by NADPH to yield (R)-2,3-dihydroxy-isovalerate. This chain is Ketol-acid reductoisomerase (NADP(+)), found in Aquifex aeolicus (strain VF5).